The sequence spans 283 residues: Formamidopyrimidine-DNA glycosylase (283 aa).

Pro-2 acts as the Schiff-base intermediate with DNA in catalysis. Glu-3 acts as the Proton donor in catalysis. Lys-60 acts as the Proton donor; for beta-elimination activity in catalysis. DNA is bound by residues His-95, Arg-114, and Arg-159. The FPG-type zinc-finger motif lies at 244-278 (WVYGRHNQPCRVCGTPIERIKLGGRSSHFCPQCQP). Arg-268 functions as the Proton donor; for delta-elimination activity in the catalytic mechanism.

It belongs to the FPG family. As to quaternary structure, monomer. Requires Zn(2+) as cofactor.

It carries out the reaction Hydrolysis of DNA containing ring-opened 7-methylguanine residues, releasing 2,6-diamino-4-hydroxy-5-(N-methyl)formamidopyrimidine.. It catalyses the reaction 2'-deoxyribonucleotide-(2'-deoxyribose 5'-phosphate)-2'-deoxyribonucleotide-DNA = a 3'-end 2'-deoxyribonucleotide-(2,3-dehydro-2,3-deoxyribose 5'-phosphate)-DNA + a 5'-end 5'-phospho-2'-deoxyribonucleoside-DNA + H(+). In terms of biological role, involved in base excision repair of DNA damaged by oxidation or by mutagenic agents. Acts as a DNA glycosylase that recognizes and removes damaged bases. Has a preference for oxidized purines, such as 7,8-dihydro-8-oxoguanine (8-oxoG). Has AP (apurinic/apyrimidinic) lyase activity and introduces nicks in the DNA strand. Cleaves the DNA backbone by beta-delta elimination to generate a single-strand break at the site of the removed base with both 3'- and 5'-phosphates. The chain is Formamidopyrimidine-DNA glycosylase from Crocosphaera subtropica (strain ATCC 51142 / BH68) (Cyanothece sp. (strain ATCC 51142)).